A 373-amino-acid polypeptide reads, in one-letter code: Transcription factor NF-E2 45 kDa subunit (373 aa).

Disordered stretches follow at residues 1-22 and 40-60; these read MPPC…GELG and LNVP…PGPL. The interval 1 to 83 is required for interaction with MAPK8; that stretch reads MPPCPPQPNR…AGFTLPPPPY (83 aa). The segment at 1–206 is transactivation domain; it reads MPPCPPQPNR…PPTETPLVLE (206 aa). 2 short sequence motifs (PXY motif) span residues 61–65 and 79–83; these read PPPTY and PPPPY. Residues 131–163 are disordered; it reads LPVGQPKPQEDPESDSGLSLNYSDAESLELEGT. Ser157 is modified (phosphoserine; by MAPK8). Ser170 carries the post-translational modification Phosphoserine; by PKA. The interval 206-225 is disordered; it reads ESSSGPVRAKPAVRGEAGSR. In terms of domain architecture, bZIP spans 266 to 329; sequence LVRDIRRRGK…EVMRQQLTEL (64 aa). The interval 268–287 is basic motif; the sequence is RDIRRRGKNKVAAQNCRKRK. Positions 291–298 are leucine-zipper; the sequence is IVQLEREL. Lys368 is covalently cross-linked (Glycyl lysine isopeptide (Lys-Gly) (interchain with G-Cter in SUMO); alternate). Residue Lys368 forms a Glycyl lysine isopeptide (Lys-Gly) (interchain with G-Cter in SUMO1); alternate linkage.

The protein belongs to the bZIP family. CNC subfamily. Homodimer; can bind DNA as a homodimer. Erythroid transcription activator nuclear factor erythroid-derived 2 (NF-E2), composed of a heterodimer of NFE2 and MAFK, possesses transactivation activity on beta-globin. Also forms high affinity heterodimer with MAFG; the interaction promotes erythropoiesis. Interacts (via the PXY motif 1) with ITCH (via the WW 1 domain); the interaction promotes 'Lys63'-linked ubiquitination of NFE2, translocates it to the cytoplasm and inhibits its transactivation activity. Interacts with KMT2D/MLL2; the interaction promotes transactivation of the beta-globin locus. Interacts with MAPK8 (phosphorylated form); the interaction leads to phosphorylation of NFE2 in undifferentiated cells. In terms of processing, phosphorylated on serine residues. In undifferentiated erythrocytes, phosphorylated by MAPK8 which then leads to ubiquitination and protein degradation. Sumoylated. Sumoylation is required for translocation to nuclear bodies PODs, anchoring to the gene loci, and transactivation of the beta-globin gene. Post-translationally, ubiquitinated mainly by 'Lys63'-linked ubiquitin. Polyubiquitination with 'Lys63'-linked ubiquitin by ITCH retains NFE2 in the cytoplasm preventing its transactivation activity. In undifferentiated erythrocyte, ubiquitinated after MAPK8-mediatd phosphorylation leading to protein degradation.

It localises to the nucleus. It is found in the PML body. The protein localises to the cytoplasm. Component of the NF-E2 complex essential for regulating erythroid and megakaryocytic maturation and differentiation. Binds to the hypersensitive site 2 (HS2) of the beta-globin control region (LCR). This subunit (NFE2) recognizes the TCAT/C sequence of the AP-1-like core palindrome present in a number of erythroid and megakaryocytic gene promoters. Requires MAFK or other small MAF proteins for binding to the NF-E2 motif. May play a role in all aspects of hemoglobin production from globin and heme synthesis to procurement of iron. The chain is Transcription factor NF-E2 45 kDa subunit (Nfe2) from Rattus norvegicus (Rat).